Here is a 103-residue protein sequence, read N- to C-terminus: Large ribosomal subunit protein bL21 (103 aa).

It belongs to the bacterial ribosomal protein bL21 family. Part of the 50S ribosomal subunit. Contacts protein L20.

Its function is as follows. This protein binds to 23S rRNA in the presence of protein L20. The protein is Large ribosomal subunit protein bL21 of Salmonella agona (strain SL483).